The chain runs to 557 residues: Formate--tetrahydrofolate ligase (557 aa).

65 to 72 (SPAGEGKT) is an ATP binding site.

This sequence belongs to the formate--tetrahydrofolate ligase family.

It carries out the reaction (6S)-5,6,7,8-tetrahydrofolate + formate + ATP = (6R)-10-formyltetrahydrofolate + ADP + phosphate. The protein operates within one-carbon metabolism; tetrahydrofolate interconversion. The sequence is that of Formate--tetrahydrofolate ligase from Methylobacillus flagellatus (strain ATCC 51484 / DSM 6875 / VKM B-1610 / KT).